The sequence spans 179 residues: Large ribosomal subunit protein uL5 (179 aa).

This sequence belongs to the universal ribosomal protein uL5 family. Part of the 50S ribosomal subunit; part of the 5S rRNA/L5/L18/L25 subcomplex. Contacts the 5S rRNA and the P site tRNA. Forms a bridge to the 30S subunit in the 70S ribosome.

Functionally, this is one of the proteins that bind and probably mediate the attachment of the 5S RNA into the large ribosomal subunit, where it forms part of the central protuberance. In the 70S ribosome it contacts protein S13 of the 30S subunit (bridge B1b), connecting the 2 subunits; this bridge is implicated in subunit movement. Contacts the P site tRNA; the 5S rRNA and some of its associated proteins might help stabilize positioning of ribosome-bound tRNAs. The sequence is that of Large ribosomal subunit protein uL5 from Bdellovibrio bacteriovorus (strain ATCC 15356 / DSM 50701 / NCIMB 9529 / HD100).